The chain runs to 340 residues: Phosphoribosylformylglycinamidine cyclo-ligase (340 aa).

This sequence belongs to the AIR synthase family.

Its subcellular location is the cytoplasm. It carries out the reaction 2-formamido-N(1)-(5-O-phospho-beta-D-ribosyl)acetamidine + ATP = 5-amino-1-(5-phospho-beta-D-ribosyl)imidazole + ADP + phosphate + H(+). The protein operates within purine metabolism; IMP biosynthesis via de novo pathway; 5-amino-1-(5-phospho-D-ribosyl)imidazole from N(2)-formyl-N(1)-(5-phospho-D-ribosyl)glycinamide: step 2/2. The protein is Phosphoribosylformylglycinamidine cyclo-ligase of Streptococcus agalactiae serotype Ia (strain ATCC 27591 / A909 / CDC SS700).